A 219-amino-acid chain; its full sequence is Large ribosomal subunit protein uL3 (219 aa).

The protein belongs to the universal ribosomal protein uL3 family. Part of the 50S ribosomal subunit. Forms a cluster with proteins L14 and L19.

One of the primary rRNA binding proteins, it binds directly near the 3'-end of the 23S rRNA, where it nucleates assembly of the 50S subunit. This is Large ribosomal subunit protein uL3 from Salinispora tropica (strain ATCC BAA-916 / DSM 44818 / JCM 13857 / NBRC 105044 / CNB-440).